The sequence spans 100 residues: MQLSPQEKDKLLIFTAFLVAERRKNKGLKLNYPEAVAYISGLILEGAREGKLVAELMSEGQTWLTRDDVMAGVAEMVDEVQVEATFPDGTKLVTIHNPIQ.

It belongs to the urease gamma subunit family. As to quaternary structure, heterotrimer of UreA (gamma), UreB (beta) and UreC (alpha) subunits. Three heterotrimers associate to form the active enzyme.

Its subcellular location is the cytoplasm. The catalysed reaction is urea + 2 H2O + H(+) = hydrogencarbonate + 2 NH4(+). Its pathway is nitrogen metabolism; urea degradation; CO(2) and NH(3) from urea (urease route): step 1/1. The sequence is that of Urease subunit gamma from Picosynechococcus sp. (strain ATCC 27264 / PCC 7002 / PR-6) (Agmenellum quadruplicatum).